The primary structure comprises 220 residues: Small ribosomal subunit protein uS3 (220 aa).

The region spanning 43 to 111 (IRSYLTKTLD…QVQLNILEVK (69 aa)) is the KH type-2 domain.

The protein belongs to the universal ribosomal protein uS3 family. Part of the 30S ribosomal subunit. Forms a tight complex with proteins S10 and S14.

Its function is as follows. Binds the lower part of the 30S subunit head. Binds mRNA in the 70S ribosome, positioning it for translation. This Tropheryma whipplei (strain TW08/27) (Whipple's bacillus) protein is Small ribosomal subunit protein uS3.